The sequence spans 447 residues: Argininosuccinate synthase (447 aa).

ATP-binding positions include 17–25 (AFSGGLDTS) and Ala-43. Tyr-99 is a binding site for L-citrulline. ATP-binding residues include Gly-129 and Thr-131. 3 residues coordinate L-aspartate: Thr-131, Asn-135, and Asp-136. Asn-135 contributes to the L-citrulline binding site. Asp-136 serves as a coordination point for ATP. L-citrulline-binding residues include Arg-139 and Ser-192. Asp-194 lines the ATP pocket. L-citrulline-binding residues include Thr-201, Glu-203, and Glu-280.

It belongs to the argininosuccinate synthase family. Type 2 subfamily. As to quaternary structure, homotetramer.

Its subcellular location is the cytoplasm. The catalysed reaction is L-citrulline + L-aspartate + ATP = 2-(N(omega)-L-arginino)succinate + AMP + diphosphate + H(+). Its pathway is amino-acid biosynthesis; L-arginine biosynthesis; L-arginine from L-ornithine and carbamoyl phosphate: step 2/3. This Salmonella newport (strain SL254) protein is Argininosuccinate synthase.